Consider the following 105-residue polypeptide: Pyruvate synthase subunit PorD (105 aa).

2 4Fe-4S ferredoxin-type domains span residues 44–73 (FRPE…LDEE) and 74–103 (GYPV…MVRE). [4Fe-4S] cluster-binding residues include C53, C56, C59, C63, C83, C86, C89, and C93.

In terms of assembly, heterotetramer of one alpha, one beta, one delta and one gamma chain. [4Fe-4S] cluster is required as a cofactor.

In Pyrococcus abyssi (strain GE5 / Orsay), this protein is Pyruvate synthase subunit PorD (porD).